A 78-amino-acid polypeptide reads, in one-letter code: HssA/B-like protein 29 (78 aa).

The interval 1 to 31 (MTLFSSITSISKTNTSSKSSLNSFSGSSLSM) is disordered.

Belongs to the hssA/B family.

This Dictyostelium discoideum (Social amoeba) protein is HssA/B-like protein 29 (hssl29).